The sequence spans 361 residues: Thymidine kinase (361 aa).

17–24 lines the ATP pocket; sequence GPHGVGKS. Glutamate 46 functions as the Proton acceptor in the catalytic mechanism. Substrate is bound by residues tyrosine 64 and glutamine 88. Arginine 184 lines the ATP pocket. Arginine 190 provides a ligand contact to substrate.

This sequence belongs to the herpesviridae thymidine kinase family. In terms of assembly, homodimer.

It carries out the reaction thymidine + ATP = dTMP + ADP + H(+). In terms of biological role, catalyzes the transfer of the gamma-phospho group of ATP to thymidine to generate dTMP in the salvage pathway of pyrimidine synthesis. The dTMP serves as a substrate for DNA polymerase during viral DNA replication. Allows the virus to be reactivated and to grow in non-proliferative cells lacking a high concentration of phosphorylated nucleic acid precursors. The protein is Thymidine kinase of Saimiriine herpesvirus 1 (strain MV-5-4-PSL) (SaHV-1).